The sequence spans 430 residues: Adenylosuccinate synthetase (430 aa).

GTP is bound by residues 12–18 (GDEGKGK) and 40–42 (GHT). The Proton acceptor role is filled by aspartate 13. Mg(2+) is bound by residues aspartate 13 and glycine 40. Residues 13 to 16 (DEGK), 38 to 41 (NAGH), threonine 130, arginine 144, glutamine 224, and threonine 239 each bind IMP. The Proton donor role is filled by histidine 41. A disordered region spans residues 277–298 (PFPTEQDNETGRKIGERGREFG). Residues 285–296 (ETGRKIGERGRE) are compositionally biased toward basic and acidic residues. Substrate is bound at residue 299 to 305 (TNTGRPR). Arginine 303 lines the IMP pocket. Residues arginine 305, 331–333 (KLD), and 413–415 (STS) each bind GTP.

Belongs to the adenylosuccinate synthetase family. As to quaternary structure, homodimer. It depends on Mg(2+) as a cofactor.

The protein localises to the cytoplasm. The catalysed reaction is IMP + L-aspartate + GTP = N(6)-(1,2-dicarboxyethyl)-AMP + GDP + phosphate + 2 H(+). It participates in purine metabolism; AMP biosynthesis via de novo pathway; AMP from IMP: step 1/2. Its function is as follows. Plays an important role in the de novo pathway of purine nucleotide biosynthesis. Catalyzes the first committed step in the biosynthesis of AMP from IMP. This chain is Adenylosuccinate synthetase, found in Bradyrhizobium sp. (strain BTAi1 / ATCC BAA-1182).